Reading from the N-terminus, the 154-residue chain is UPF0225 protein Asuc_0343 (154 aa).

This sequence belongs to the UPF0225 family.

The protein is UPF0225 protein Asuc_0343 of Actinobacillus succinogenes (strain ATCC 55618 / DSM 22257 / CCUG 43843 / 130Z).